The sequence spans 272 residues: MTKPTPNEIGKGYDAFADLLDQLWGENLHHGYWDDESATLEEATTRLTDRLAGMLPLRAGDRLLDIGCGNGEPAIRMATANDVMVTGISISEKQVERANDRAYKADVDDRVVFEYADAMELPYPDASFDVVWALESLHHMPDRWHVIRQAARVLRPGGRLALGDFLLVPSPAGLEADAERVREVGKGVVAVVSLDEYQAHLREAGLEPESAEDVSQYTRPSWTKAAERFEGLREQALQHIEAAQFEVTLGRFRAFSEEPSLGYVLLTARKPD.

Residues Ser-89, Gln-94, 117–118 (DA), Leu-134, and His-139 each bind S-adenosyl-L-methionine.

It belongs to the class I-like SAM-binding methyltransferase superfamily. In terms of assembly, exists probably as a trimer.

It catalyses the reaction 27-O-demethylrifamycin SV + S-adenosyl-L-methionine = rifamycin SV + S-adenosyl-L-homocysteine + H(+). It participates in antibiotic biosynthesis; rifamycin B biosynthesis. With respect to regulation, slightly inhibited by Ca(2+) and Mg(2+). Strongly inhibited by Zn(2+), Ni(2+) and Co(2+). Catalyzes the methylation of 27-O-demethylrifamycin SV (DMRSV) to rifamycin SV. The polypeptide is 27-O-demethylrifamycin SV methyltransferase (Amycolatopsis mediterranei (strain S699) (Nocardia mediterranei)).